The chain runs to 90 residues: Small ribosomal subunit protein bS16 (90 aa).

It belongs to the bacterial ribosomal protein bS16 family.

The protein is Small ribosomal subunit protein bS16 of Moorella thermoacetica (strain ATCC 39073 / JCM 9320).